Consider the following 101-residue polypeptide: Large ribosomal subunit protein uL23 (101 aa).

Belongs to the universal ribosomal protein uL23 family. In terms of assembly, part of the 50S ribosomal subunit. Contacts protein L29, and trigger factor when it is bound to the ribosome.

Its function is as follows. One of the early assembly proteins it binds 23S rRNA. One of the proteins that surrounds the polypeptide exit tunnel on the outside of the ribosome. Forms the main docking site for trigger factor binding to the ribosome. The protein is Large ribosomal subunit protein uL23 of Corynebacterium jeikeium (strain K411).